The sequence spans 38 residues: Photosystem II reaction center protein L (38 aa).

A helical membrane pass occupies residues 17–37 (SLYWGLLLIFVLAILFSSYIF).

This sequence belongs to the PsbL family. In terms of assembly, PSII is composed of 1 copy each of membrane proteins PsbA, PsbB, PsbC, PsbD, PsbE, PsbF, PsbH, PsbI, PsbJ, PsbK, PsbL, PsbM, PsbT, PsbX, PsbY, PsbZ, Psb30/Ycf12, at least 3 peripheral proteins of the oxygen-evolving complex and a large number of cofactors. It forms dimeric complexes.

It is found in the plastid. The protein resides in the chloroplast thylakoid membrane. Functionally, one of the components of the core complex of photosystem II (PSII). PSII is a light-driven water:plastoquinone oxidoreductase that uses light energy to abstract electrons from H(2)O, generating O(2) and a proton gradient subsequently used for ATP formation. It consists of a core antenna complex that captures photons, and an electron transfer chain that converts photonic excitation into a charge separation. This subunit is found at the monomer-monomer interface and is required for correct PSII assembly and/or dimerization. The polypeptide is Photosystem II reaction center protein L (Nephroselmis olivacea (Green alga)).